A 134-amino-acid polypeptide reads, in one-letter code: Profilin-2 (134 aa).

Cys-13 and Cys-118 are joined by a disulfide. Residues 84–100 (AVIRGKKGSGGITIKKT) carry the Involved in PIP2 interaction motif. The residue at position 114 (Thr-114) is a Phosphothreonine.

It belongs to the profilin family. In terms of assembly, occurs in many kinds of cells as a complex with monomeric actin in a 1:1 ratio. Phosphorylated by MAP kinases.

It is found in the cytoplasm. Its subcellular location is the cytoskeleton. Its function is as follows. Binds to actin and affects the structure of the cytoskeleton. At high concentrations, profilin prevents the polymerization of actin, whereas it enhances it at low concentrations. The chain is Profilin-2 from Olea europaea (Common olive).